The chain runs to 274 residues: tRNA-cytidine(32) 2-sulfurtransferase (274 aa).

Residues 40-45 (SGGKDS) carry the PP-loop motif motif. [4Fe-4S] cluster contacts are provided by Cys-115, Cys-118, and Cys-206.

This sequence belongs to the TtcA family. Homodimer. Mg(2+) is required as a cofactor. The cofactor is [4Fe-4S] cluster.

The protein localises to the cytoplasm. It carries out the reaction cytidine(32) in tRNA + S-sulfanyl-L-cysteinyl-[cysteine desulfurase] + AH2 + ATP = 2-thiocytidine(32) in tRNA + L-cysteinyl-[cysteine desulfurase] + A + AMP + diphosphate + H(+). It functions in the pathway tRNA modification. Functionally, catalyzes the ATP-dependent 2-thiolation of cytidine in position 32 of tRNA, to form 2-thiocytidine (s(2)C32). The sulfur atoms are provided by the cysteine/cysteine desulfurase (IscS) system. The sequence is that of tRNA-cytidine(32) 2-sulfurtransferase from Ectopseudomonas mendocina (strain ymp) (Pseudomonas mendocina).